The sequence spans 450 residues: tRNA-2-methylthio-N(6)-dimethylallyladenosine synthase (450 aa).

Residues 7–127 (KKVFIKTYGC…LPDVLARVRG (121 aa)) enclose the MTTase N-terminal domain. The [4Fe-4S] cluster site is built by Cys-16, Cys-52, Cys-90, Cys-168, Cys-172, and Cys-175. Residues 154 to 388 (IKRGVTAFLT…LLLKQQQGFG (235 aa)) form the Radical SAM core domain. In terms of domain architecture, TRAM spans 389–450 (SSLVGSTIDT…GYNSLFAELA (62 aa)).

This sequence belongs to the methylthiotransferase family. MiaB subfamily. Monomer. [4Fe-4S] cluster is required as a cofactor.

The protein resides in the cytoplasm. It carries out the reaction N(6)-dimethylallyladenosine(37) in tRNA + (sulfur carrier)-SH + AH2 + 2 S-adenosyl-L-methionine = 2-methylsulfanyl-N(6)-dimethylallyladenosine(37) in tRNA + (sulfur carrier)-H + 5'-deoxyadenosine + L-methionine + A + S-adenosyl-L-homocysteine + 2 H(+). In terms of biological role, catalyzes the methylthiolation of N6-(dimethylallyl)adenosine (i(6)A), leading to the formation of 2-methylthio-N6-(dimethylallyl)adenosine (ms(2)i(6)A) at position 37 in tRNAs that read codons beginning with uridine. This Mesorhizobium japonicum (strain LMG 29417 / CECT 9101 / MAFF 303099) (Mesorhizobium loti (strain MAFF 303099)) protein is tRNA-2-methylthio-N(6)-dimethylallyladenosine synthase.